The following is a 287-amino-acid chain: Short-chain dehydrogenase virD (287 aa).

Valine 10, threonine 36, aspartate 57, asparagine 85, tyrosine 149, lysine 153, valine 182, and threonine 184 together coordinate NADP(+). Tyrosine 149 functions as the Proton acceptor in the catalytic mechanism. The active-site Lowers pKa of active site Tyr is the lysine 153.

This sequence belongs to the short-chain dehydrogenases/reductases (SDR) family.

Its pathway is secondary metabolite biosynthesis. Functionally, short-chain dehydrogenase; part of the gene cluster that mediates the biosynthesis of virensols and trichoxide, fungal natural products that contain or are derived from a salicylaldehyde core. The pathway begins with the synthesis of the reduced chain in virensol C by the highly reducing polyketide synthase virA via condensation of one acetate and 8 malonate units. VirA has interesting programming rules since the first 2 ketides are fully reduced, the 3 following ketides undergo beta-dehydration, and the last 3 ketides are only reduced to beta-hydroxys to yield the trihydroxy portion. The production of aldehyde virensol C by virA alone is surprising, since virA does not contain a reductase (R) domain that is typically associated with reductive product release in HRPKS. The cupin-domain enzyme virC is involved in enhancing virA product turnover. The short-chain dehydrogenase virB then oxidizes the C-7 alcohol of virensol C to a ketone, yielding virensol D. Virensol D is further transformed to salicylaldehyde 5-deoxyaurocitrin by the short-chain dehydrogenase virD. VirD catalyzes the dehydrogenation of C-3 to form the beta-ketone aldehyde, which is followed by the generation of the nucleophilic C-2 that is required for the intramolecular aldol condensation between C-2 and C-7, itself followed by dehydration and aromatization which leads to salicylaldehyde 5-deoxyaurocitrin. While the dehydrogenation of virensol D is definitely catalyzed by virD, the aldol condensation and dehydration may be uncatalyzed or assisted by virD. The short chain dehydrogenase virG then converts salicylaldehyde 5-deoxyaurocitrin into virensol B which is further hydroxylated by the cytochrome P450 monooxygenase virE to yield the hydroquinone virensol A. VirI then may oxidize virensol A to form the quinone, while virH performs the epoxidation. Finally, the two remaining short-chain dehydrogenases, virK and virL, are probably responsible for reducing the ketones to the corresponding alcohols to furnish the epoxycyclohexanol structure in trichoxide. This is Short-chain dehydrogenase virD from Hypocrea virens (strain Gv29-8 / FGSC 10586) (Gliocladium virens).